Consider the following 423-residue polypeptide: Serine hydroxymethyltransferase (423 aa).

Residues L120 and 124–126 each bind (6S)-5,6,7,8-tetrahydrofolate; that span reads GHL. K229 is subject to N6-(pyridoxal phosphate)lysine. Residue 353–355 participates in (6S)-5,6,7,8-tetrahydrofolate binding; the sequence is SPF.

The protein belongs to the SHMT family. As to quaternary structure, homodimer. Requires pyridoxal 5'-phosphate as cofactor.

It is found in the cytoplasm. It carries out the reaction (6R)-5,10-methylene-5,6,7,8-tetrahydrofolate + glycine + H2O = (6S)-5,6,7,8-tetrahydrofolate + L-serine. The protein operates within one-carbon metabolism; tetrahydrofolate interconversion. It functions in the pathway amino-acid biosynthesis; glycine biosynthesis; glycine from L-serine: step 1/1. Its function is as follows. Catalyzes the reversible interconversion of serine and glycine with tetrahydrofolate (THF) serving as the one-carbon carrier. This reaction serves as the major source of one-carbon groups required for the biosynthesis of purines, thymidylate, methionine, and other important biomolecules. Also exhibits THF-independent aldolase activity toward beta-hydroxyamino acids, producing glycine and aldehydes, via a retro-aldol mechanism. The polypeptide is Serine hydroxymethyltransferase (Prochlorococcus marinus (strain MIT 9515)).